The following is a 90-amino-acid chain: Small ribosomal subunit protein bS16 (90 aa).

It belongs to the bacterial ribosomal protein bS16 family.

The polypeptide is Small ribosomal subunit protein bS16 (Streptococcus thermophilus (strain CNRZ 1066)).